The following is a 395-amino-acid chain: S-adenosylmethionine synthase 2 (395 aa).

Glu-9 is a Mg(2+) binding site. His-15 contacts ATP. A K(+)-binding site is contributed by Glu-43. The L-methionine site is built by Glu-56 and Gln-99. ATP contacts are provided by residues Asp-167–Lys-169, Ser-235–Phe-238, Asp-246, Arg-252–Lys-253, Ala-269, Lys-273, and Lys-277. Asp-246 contributes to the L-methionine binding site. Lys-277 lines the L-methionine pocket.

The protein belongs to the AdoMet synthase family. As to quaternary structure, homotetramer. Mn(2+) serves as cofactor. It depends on Mg(2+) as a cofactor. Co(2+) is required as a cofactor. The cofactor is K(+).

It localises to the cytoplasm. The enzyme catalyses L-methionine + ATP + H2O = S-adenosyl-L-methionine + phosphate + diphosphate. It functions in the pathway amino-acid biosynthesis; S-adenosyl-L-methionine biosynthesis; S-adenosyl-L-methionine from L-methionine: step 1/1. In terms of biological role, catalyzes the formation of S-adenosylmethionine from methionine and ATP. The reaction comprises two steps that are both catalyzed by the same enzyme: formation of S-adenosylmethionine (AdoMet) and triphosphate, and subsequent hydrolysis of the triphosphate. The chain is S-adenosylmethionine synthase 2 (METK2) from Suaeda salsa (Seepweed).